Here is a 1059-residue protein sequence, read N- to C-terminus: Dihydropyrimidine dehydrogenase [NADP(+)] (1059 aa).

The 35-residue stretch at 84–118 (ERGALKEAMRCLKCADAPCQKSCPTQLDVKSFITS) folds into the 4Fe-4S ferredoxin-type 1 domain. 8 residues coordinate [4Fe-4S] cluster: C94, C97, C102, C106, C145, C151, C155, and Q171. Residues 207-211 (GCGPA), 231-239 (EKRAYIGGL), R248, and L274 contribute to the FAD site. NADP(+)-binding positions include 354-357 (AGDT), 378-379 (RK), R385, 451-453 (AFG), and 495-501 (DVAGVAE). 494–503 (GDVAGVAETT) contributes to the FAD binding site. Residues S564 and 588 to 589 (KT) each bind FMN. Substrate contacts are provided by residues N623 and 682 to 684 (NLS). The active-site Proton acceptor is the C685. An FMN-binding site is contributed by K723. 750–751 (NT) is a substrate binding site. FMN contacts are provided by residues G781, 807-809 (TGG), and 830-831 (CS). 4Fe-4S ferredoxin-type domains lie at 955 to 987 (KVAIIDDDMCINCGKCYMTCNDSGYQAITFDPV) and 989 to 1019 (HQPHVTEDDCTGCTLCYSVCPIPECIEMVPR). 8 residues coordinate [4Fe-4S] cluster: C964, C967, C970, C974, C998, C1001, C1004, and C1008.

The protein belongs to the dihydropyrimidine dehydrogenase family. [4Fe-4S] cluster serves as cofactor. FAD is required as a cofactor. It depends on FMN as a cofactor.

The catalysed reaction is 5,6-dihydrouracil + NADP(+) = uracil + NADPH + H(+). Its pathway is amino-acid biosynthesis; beta-alanine biosynthesis. Functionally, involved in pyrimidine base degradation. Catalyzes the reduction of uracil and thymine. Involved in the degradation of the chemotherapeutic drug 5-fluorouracil. This is Dihydropyrimidine dehydrogenase [NADP(+)] (dpyd-1) from Caenorhabditis elegans.